Here is a 127-residue protein sequence, read N- to C-terminus: Protein ApaG (127 aa).

In terms of domain architecture, ApaG spans 3-127 (DADVYAISVE…FVLAIPRTLH (125 aa)).

This is Protein ApaG from Stenotrophomonas maltophilia (strain K279a).